Reading from the N-terminus, the 88-residue chain is Large ribosomal subunit protein eL31 (88 aa).

It belongs to the eukaryotic ribosomal protein eL31 family.

This is Large ribosomal subunit protein eL31 (rpl31e) from Archaeoglobus fulgidus (strain ATCC 49558 / DSM 4304 / JCM 9628 / NBRC 100126 / VC-16).